Consider the following 136-residue polypeptide: Large ribosomal subunit protein uL16 (136 aa).

The protein belongs to the universal ribosomal protein uL16 family. In terms of assembly, part of the 50S ribosomal subunit.

Its function is as follows. Binds 23S rRNA and is also seen to make contacts with the A and possibly P site tRNAs. The protein is Large ribosomal subunit protein uL16 of Rickettsia rickettsii (strain Iowa).